The sequence spans 66 residues: Large ribosomal subunit protein eL29 (66 aa).

Polar residues predominate over residues 1 to 14 (MAKSKNSTNKNQIS). Residues 1–66 (MAKSKNSTNK…KNLEKKVNKE (66 aa)) form a disordered region. Residues 15–31 (KSHRNGIKKPKDHRHIS) show a composition bias toward basic residues. A compositionally biased stretch (basic and acidic residues) spans 47–66 (IKNDPSIKKSKNLEKKVNKE).

Belongs to the eukaryotic ribosomal protein eL29 family.

The protein resides in the cytoplasm. This chain is Large ribosomal subunit protein eL29 (RPL29), found in Tetrahymena thermophila.